A 517-amino-acid chain; its full sequence is uncharacterized protein (517 aa).

Disordered regions lie at residues 16–148 (KDES…TITK), 156–175 (VNKEINNNNNNNNNNNNTTT), and 216–351 (KLEK…EENE). Residues 48-75 (NNNNNNNNTTTTNNNTNNSNTSTSNNSK) show a composition bias toward low complexity. Over residues 84 to 112 (FDDDDDDGDEEDEEEEDDDDDDDDDDDET) the composition is skewed to acidic residues. Pro residues predominate over residues 127 to 143 (QPQPQPQPQPQPQPPIK). Polar residues predominate over residues 236-252 (VSSTLSNSFDPNIIHNQ). Residues 254–266 (SPPPPPISIPIPL) show a composition bias toward pro residues. 2 stretches are compositionally biased toward low complexity: residues 271 to 320 (NLNN…NSNI) and 327 to 347 (SSSMVNNVNNNSSDNSSSNNN). Positions 340-452 (DNSSSNNNEE…HQNQQNSMNN (113 aa)) form a coiled coil.

It belongs to the ENTR1 family.

This is an uncharacterized protein from Dictyostelium discoideum (Social amoeba).